A 444-amino-acid polypeptide reads, in one-letter code: C4-dicarboxylate transport protein (444 aa).

9 helical membrane passes run 21–41 (HLYVQVLVAIAAGILLGHFYP), 57–77 (LVKMIIAPVIFLTVATGIAGM), 92–112 (IYFLTFSTLALIIGLIVANVV), 161–181 (GDILQVLFFSVLFGIALALVG), 201–221 (LVSILMKAAPIGAFGAMAFTI), 234–254 (LLIGTFYLTALLFVLVVLGAV), 320–340 (IYMTLAALFIAQATDIPLSLS), 345–365 (LLLVAMLSSKGAAGITGAGFI), and 368–388 (AATLSVVPAVPVAGMALILGI).

This sequence belongs to the dicarboxylate/amino acid:cation symporter (DAACS) (TC 2.A.23) family.

The protein resides in the cell inner membrane. In terms of biological role, responsible for the transport of dicarboxylates such as succinate, fumarate, and malate from the periplasm across the membrane. This is C4-dicarboxylate transport protein from Brucella anthropi (strain ATCC 49188 / DSM 6882 / CCUG 24695 / JCM 21032 / LMG 3331 / NBRC 15819 / NCTC 12168 / Alc 37) (Ochrobactrum anthropi).